Consider the following 154-residue polypeptide: Large ribosomal subunit protein bL19 (154 aa).

The interval 1–33 is disordered; it reads MAADPKDTTVTDENTETAATAEVETVASAPTSP. Residues 16–27 show a composition bias toward low complexity; that stretch reads ETAATAEVETVA.

Belongs to the bacterial ribosomal protein bL19 family.

In terms of biological role, this protein is located at the 30S-50S ribosomal subunit interface and may play a role in the structure and function of the aminoacyl-tRNA binding site. The sequence is that of Large ribosomal subunit protein bL19 from Parasynechococcus marenigrum (strain WH8102).